The chain runs to 98 residues: MSMVYINIFLAFILSLMGMLVYRSHLMSSLLCLEGMMLSLFVMMSVTILNNHLTLASMMPIVLLVFAACEAALGLSLLVMVSNTYGTDHVQNLNLLQC.

3 helical membrane passes run 1-21 (MSMV…GMLV), 29-49 (SLLC…VTIL), and 61-81 (IVLL…LVMV).

Belongs to the complex I subunit 4L family. As to quaternary structure, core subunit of respiratory chain NADH dehydrogenase (Complex I) which is composed of 45 different subunits.

The protein resides in the mitochondrion inner membrane. The enzyme catalyses a ubiquinone + NADH + 5 H(+)(in) = a ubiquinol + NAD(+) + 4 H(+)(out). Functionally, core subunit of the mitochondrial membrane respiratory chain NADH dehydrogenase (Complex I) which catalyzes electron transfer from NADH through the respiratory chain, using ubiquinone as an electron acceptor. Part of the enzyme membrane arm which is embedded in the lipid bilayer and involved in proton translocation. The sequence is that of NADH-ubiquinone oxidoreductase chain 4L (MT-ND4L) from Vulpes vulpes (Red fox).